The following is a 369-amino-acid chain: Replication factor C subunit 5 (369 aa).

The disordered stretch occupies residues 21–40; that stretch reads INKGKDVVGFGPPPQSKATP. Residue 79 to 86 participates in ATP binding; sequence GPPGTGKT.

The protein belongs to the activator 1 small subunits family. Heterotetramer of subunits RFC2, RFC3, RFC4 and RFC5 that can form a complex with RFC1.

The protein localises to the nucleus. Functions in cell replication and proliferation. May be involved in chromatin assembly and remodeling. Plays a role in the negative control of pathogenesis-related gene expression and systemic acquired resistance (SAR). The sequence is that of Replication factor C subunit 5 (RFC5) from Arabidopsis thaliana (Mouse-ear cress).